We begin with the raw amino-acid sequence, 3432 residues long: Genome polyprotein (3432 aa).

An interaction with host EXOC1 region spans residues 2-15 (TKKPGGPGKNRAIN). Over 2–109 (TKKPGGPGKN…RKQNKRGGNE (108 aa)) the chain is Cytoplasmic. The interval 37–72 (LLDGRGPVRFVLALITFFKFTALAPTKALLGRWKAV) is hydrophobic; homodimerization of capsid protein C. The propeptide at 106 to 127 (GGNEGSIMWLASLAVVIACAGA) is ER anchor for the capsid protein C, removed in mature form by serine protease NS3. A helical membrane pass occupies residues 110 to 130 (GSIMWLASLAVVIACAGAMKL). The Extracellular segment spans residues 131 to 253 (SNFQGKLLMT…ATRYLMKTEN (123 aa)). N-linked (GlcNAc...) asparagine; by host glycosylation is present at asparagine 142. Residues 254–274 (WIIRNPGYAFLAAVLGWMLGS) form a helical membrane-spanning segment. Over 275–279 (NNGQR) the chain is Cytoplasmic. A helical membrane pass occupies residues 280–294 (VVFTILLLLVAPAYS). Topologically, residues 295-746 (FNCLGMGNRD…QVFGGAFRTL (452 aa)) are extracellular. 6 disulfide bridges follow: cysteine 297–cysteine 324, cysteine 354–cysteine 410, cysteine 354–cysteine 415, cysteine 368–cysteine 399, cysteine 386–cysteine 410, and cysteine 386–cysteine 415. The interval 392–405 (DRGWGNGCGLFGKG) is fusion peptide. N-linked (GlcNAc...) asparagine; by host glycosylation occurs at asparagine 448. 2 disulfide bridges follow: cysteine 484-cysteine 581 and cysteine 598-cysteine 629. A helical membrane pass occupies residues 747-767 (FGGMSWITQGLMGALLLWMGV). Residues 768-773 (NARDRS) are Cytoplasmic-facing. Residues 774-794 (IALAFLATGGVLVFLATNVHA) traverse the membrane as a helical segment. Over 795 to 1219 (DTGCAIDITR…AFAEANSGGD (425 aa)) the chain is Extracellular. 6 disulfides stabilise this stretch: cysteine 798/cysteine 809, cysteine 849/cysteine 937, cysteine 973/cysteine 1017, cysteine 1074/cysteine 1123, cysteine 1085/cysteine 1106, and cysteine 1107/cysteine 1110. 2 N-linked (GlcNAc...) asparagine; by host glycosylation sites follow: asparagine 924 and asparagine 1001. The chain crosses the membrane as a helical span at residues 1220-1240 (VLHLALIAVFKIQPAFLVMNM). The Cytoplasmic portion of the chain corresponds to 1241 to 1250 (LSTRWTNQEN). The helical transmembrane segment at 1251-1271 (VVLVLGAAFFQLASVDLQIGV) threads the bilayer. Residue histidine 1272 is a topological domain, lumenal. The chain crosses the membrane as a helical span at residues 1273 to 1293 (GILNAAAIAWMIVRAITFPTT). Residues 1294–1309 (SSVTMPVLALLTPGMR) lie on the Cytoplasmic side of the membrane. The helical transmembrane segment at 1310-1330 (ALYLDTYRIILLVIGICSLLH) threads the bilayer. Residues 1331 to 1341 (ERKKTMAKKKG) are Lumenal-facing. Residues 1342–1362 (AVLLGLALTSTGWFSPTTIAA) form a helical membrane-spanning segment. Residues 1363–1374 (GLMVCNPNKKRG) are Cytoplasmic-facing. The helical transmembrane segment at 1375 to 1395 (WPATEFLSAVGLMFAIVGGLA) threads the bilayer. Over 1396 to 1398 (ELD) the chain is Lumenal. The helical transmembrane segment at 1399 to 1419 (IESMSIPFMLAGLMAVSYVVS) threads the bilayer. At 1420–1476 (GKATDMWLERAADISWEMDAAITGSSRRLDVKLDDDGDFHLIDDPGVPWKVWVLRMS) the chain is on the cytoplasmic side. The tract at residues 1427–1466 (LERAADISWEMDAAITGSSRRLDVKLDDDGDFHLIDDPGV) is interacts with and activates NS3 protease. Positions 1477 to 1497 (CIGLAALTPWAIVPAAFGYWL) form an intramembrane region, helical. Topologically, residues 1498-2173 (TLKTTKRGGV…RMALEELPDA (676 aa)) are cytoplasmic. Positions 1505–1682 (GGVFWDTPSP…DRQEEPVPEA (178 aa)) constitute a Peptidase S7 domain. Active-site charge relay system; for serine protease NS3 activity residues include histidine 1555, aspartate 1579, and serine 1639. The Helicase ATP-binding domain occupies 1685–1841 (PNMLRKRQMT…DSNAPIHDLQ (157 aa)). Residues 1689 to 1692 (RKRQ) form an important for RNA-binding region. 1698–1705 (LHPGSGKT) contributes to the ATP binding site. A DEAH box motif is present at residues 1789–1792 (DEAH). Residues 1852–2017 (GYEWITEYAG…GLVAQLYGPE (166 aa)) enclose the Helicase C-terminal domain. Lysine 1893 bears the N6-acetyllysine; by host mark. Residues 1950–1972 (NPSPITSASAAQRRGRVGRNPNQ) form a disordered region. Residues 2168-2172 (EELPD) form a regulates the ATPase activity of NS3 helicase region. A helical membrane pass occupies residues 2174-2194 (LETITLIVAITVMTGGFFLLM). The Lumenal segment spans residues 2195-2199 (MQRKG). Residues 2200–2220 (IGKMGLGALVLTLATFFLWAA) constitute an intramembrane region (helical). A topological domain (lumenal) is located at residue glutamate 2221. Residues 2222–2242 (VPGTKIAGTLLIALLLMVVLI) traverse the membrane as a helical segment. Residues 2243–2257 (PEPEKQRSQTDNQLA) lie on the Cytoplasmic side of the membrane. A helical membrane pass occupies residues 2258–2278 (VFLICVLTVVGVVAANEYGML). Residues 2279-2311 (EKTKADLKSMFGGKTQASGLTGLPSMALDLRPA) lie on the Lumenal side of the membrane. Positions 2312–2332 (TAWALYGGSTVVLTPLLKHLI) form an intramembrane region, helical. The Lumenal portion of the chain corresponds to 2333-2368 (TSEYVTTSLASINSQAGSLFVLPRGVPFTDLDLTVG). A helical membrane pass occupies residues 2369-2389 (LVFLGCWGQITLTTFLTAMVL). Residues 2390 to 2444 (ATLHYGYMLPGWQAEALRAAQRRTAAGIMKNAVVDGMVATDVPELERTTPLMQKK) lie on the Cytoplasmic side of the membrane. Residues 2445 to 2465 (VGQVLLIGVSVAAFLVNPNVT) form a helical membrane-spanning segment. Over 2466–2469 (TVRE) the chain is Lumenal. A helical transmembrane segment spans residues 2470-2490 (AGVLVTAATLTLWDNGASAVW). The Cytoplasmic portion of the chain corresponds to 2491–3432 (NSTTATGLCH…DVLIQEDRVI (942 aa)). Residues 2528-2793 (GRPGGRTLGE…DVNLGSGTRA (266 aa)) enclose the mRNA cap 0-1 NS5-type MT domain. Serine 2583 is a binding site for S-adenosyl-L-methionine. Position 2583 is a phosphoserine (serine 2583). Residue lysine 2588 is the For 2'-O-MTase activity of the active site. Residues glycine 2613, tryptophan 2614, threonine 2631, lysine 2632, aspartate 2658, and valine 2659 each contribute to the S-adenosyl-L-methionine site. Catalysis depends on aspartate 2673, which acts as the For 2'-O-MTase activity. Isoleucine 2674 lines the S-adenosyl-L-methionine pocket. Catalysis depends on for 2'-O-MTase activity residues lysine 2709 and glutamate 2745. Tyrosine 2747 lines the S-adenosyl-L-methionine pocket. Zn(2+) is bound by residues glutamate 2967, histidine 2971, cysteine 2976, and cysteine 2979. A RdRp catalytic domain is found at 3057 to 3209 (GKMYADDTAG…KPLDDRFATA (153 aa)). Zn(2+)-binding residues include histidine 3244, cysteine 3260, and cysteine 3379.

In the N-terminal section; belongs to the class I-like SAM-binding methyltransferase superfamily. mRNA cap 0-1 NS5-type methyltransferase family. As to quaternary structure, homodimer. Interacts (via N-terminus) with host EXOC1 (via C-terminus); this interaction results in EXOC1 degradation through the proteasome degradation pathway. In terms of assembly, forms heterodimers with envelope protein E in the endoplasmic reticulum and Golgi. Homodimer; in the endoplasmic reticulum and Golgi. Interacts with protein prM. Interacts with non-structural protein 1. Interacts with host HSPA5. As to quaternary structure, homodimer; Homohexamer when secreted. Interacts with envelope protein E. NS1 interacts with NS4B. Interacts with host complement protein CFH; this interaction leads to the degradation of C3. In terms of assembly, interacts (via N-terminus) with serine protease NS3. Forms a heterodimer with serine protease NS3. May form homooligomers. As to quaternary structure, forms a heterodimer with NS2B. Interacts with non-structural protein 2A (via N-terminus). Interacts with NS4B. Interacts with unphosphorylated RNA-directed RNA polymerase NS5; this interaction stimulates RNA-directed RNA polymerase NS5 guanylyltransferase activity. Interacts with host ILF2. In terms of assembly, interacts with serine protease NS3. Homodimer. Interacts with host STAT2; this interaction inhibits the phosphorylation of the latter, and, when all viral proteins are present (polyprotein), targets STAT2 for degradation. Interacts with serine protease NS3. It depends on Mn(2+) as a cofactor. The cofactor is Mg(2+). In terms of processing, specific enzymatic cleavages in vivo yield mature proteins. Cleavages in the lumen of endoplasmic reticulum are performed by host signal peptidase, whereas cleavages in the cytoplasmic side are performed by serine protease NS3. Signal cleavage at the 2K-4B site requires a prior NS3 protease-mediated cleavage at the 4A-2K site. Cleaved in post-Golgi vesicles by a host furin, releasing the mature small envelope protein M, and peptide pr. This cleavage is incomplete as up to 30% of viral particles still carry uncleaved prM. Post-translationally, N-glycosylated. In terms of processing, N-glycosylated. The excreted form is glycosylated and this is required for efficient secretion of the protein from infected cells. Acetylated by host KAT5. Acetylation modulates NS3 RNA-binding and unwinding activities and plays an important positive role for viral replication. Post-translationally, phosphorylated on serines residues. This phosphorylation may trigger NS5 nuclear localization.

It localises to the virion. The protein resides in the host nucleus. Its subcellular location is the host cytoplasm. It is found in the host perinuclear region. The protein localises to the secreted. It localises to the virion membrane. The protein resides in the host endoplasmic reticulum membrane. Its subcellular location is the host cell surface. The enzyme catalyses Selective hydrolysis of -Xaa-Xaa-|-Yaa- bonds in which each of the Xaa can be either Arg or Lys and Yaa can be either Ser or Ala.. It carries out the reaction RNA(n) + a ribonucleoside 5'-triphosphate = RNA(n+1) + diphosphate. The catalysed reaction is a ribonucleoside 5'-triphosphate + H2O = a ribonucleoside 5'-diphosphate + phosphate + H(+). It catalyses the reaction ATP + H2O = ADP + phosphate + H(+). The enzyme catalyses a 5'-end (5'-triphosphoguanosine)-ribonucleoside in mRNA + S-adenosyl-L-methionine = a 5'-end (N(7)-methyl 5'-triphosphoguanosine)-ribonucleoside in mRNA + S-adenosyl-L-homocysteine. It carries out the reaction a 5'-end (N(7)-methyl 5'-triphosphoguanosine)-ribonucleoside in mRNA + S-adenosyl-L-methionine = a 5'-end (N(7)-methyl 5'-triphosphoguanosine)-(2'-O-methyl-ribonucleoside) in mRNA + S-adenosyl-L-homocysteine + H(+). In terms of biological role, plays a role in virus budding by binding to the cell membrane and gathering the viral RNA into a nucleocapsid that forms the core of a mature virus particle. During virus entry, may induce genome penetration into the host cytoplasm after hemifusion induced by the surface proteins. Can migrate to the cell nucleus where it modulates host functions. Overcomes the anti-viral effects of host EXOC1 by sequestering and degrading the latter through the proteasome degradation pathway. Inhibits RNA silencing by interfering with host Dicer. Its function is as follows. Prevents premature fusion activity of envelope proteins in trans-Golgi by binding to envelope protein E at pH6.0. After virion release in extracellular space, gets dissociated from E dimers. Functionally, acts as a chaperone for envelope protein E during intracellular virion assembly by masking and inactivating envelope protein E fusion peptide. prM is the only viral peptide matured by host furin in the trans-Golgi network probably to avoid catastrophic activation of the viral fusion activity in acidic Golgi compartment prior to virion release. prM-E cleavage is inefficient, and many virions are only partially matured. These uncleaved prM would play a role in immune evasion. In terms of biological role, may play a role in virus budding. Exerts cytotoxic effects by activating a mitochondrial apoptotic pathway through M ectodomain. May display a viroporin activity. Binds to host cell surface receptor and mediates fusion between viral and cellular membranes. Efficient virus attachment to cell is, at least in part, mediated by host HSPA5. Envelope protein is synthesized in the endoplasmic reticulum in the form of heterodimer with protein prM. They play a role in virion budding in the ER, and the newly formed immature particle is covered with 60 spikes composed of heterodimer between precursor prM and envelope protein E. The virion is transported to the Golgi apparatus where the low pH causes dissociation of PrM-E heterodimers and formation of E homodimers. prM-E cleavage is inefficient, and many virions are only partially matured. These uncleaved prM would play a role in immune evasion. Its function is as follows. Involved in immune evasion, pathogenesis and viral replication. Once cleaved off the polyprotein, is targeted to three destinations: the viral replication cycle, the plasma membrane and the extracellular compartment. Essential for viral replication. Required for formation of the replication complex and recruitment of other non-structural proteins to the ER-derived membrane structures. Excreted as a hexameric lipoparticle that plays a role against host immune response. Antagonizing the complement function. Binds to the host macrophages and dendritic cells. Inhibits signal transduction originating from Toll-like receptor 3 (TLR3). Functionally, component of the viral RNA replication complex that functions in virion assembly and antagonizes the host alpha/beta interferon antiviral response. In terms of biological role, required cofactor for the serine protease function of NS3. May have membrane-destabilizing activity and form viroporins. Displays three enzymatic activities: serine protease, NTPase and RNA helicase. NS3 serine protease, in association with NS2B, performs its autocleavage and cleaves the polyprotein at dibasic sites in the cytoplasm: C-prM, NS2A-NS2B, NS2B-NS3, NS3-NS4A, NS4A-2K and NS4B-NS5. NS3 RNA helicase binds RNA and unwinds dsRNA in the 3' to 5' direction. Its function is as follows. Regulates the ATPase activity of the NS3 helicase activity. NS4A allows NS3 helicase to conserve energy during unwinding. Functionally, functions as a signal peptide for NS4B and is required for the interferon antagonism activity of the latter. In terms of biological role, induces the formation of ER-derived membrane vesicles where the viral replication takes place. Inhibits interferon (IFN)-induced host STAT1 phosphorylation and nuclear translocation, thereby preventing the establishment of cellular antiviral state by blocking the IFN-alpha/beta pathway. Inhibits STAT2 translocation in the nucleus after IFN-alpha treatment. Replicates the viral (+) and (-) RNA genome. Performs the capping of genomes in the cytoplasm. NS5 methylates viral RNA cap at guanine N-7 and ribose 2'-O positions. Besides its role in RNA genome replication, also prevents the establishment of cellular antiviral state by blocking the interferon-alpha/beta (IFN-alpha/beta) signaling pathway. Inhibits host TYK2 and STAT2 phosphorylation, thereby preventing activation of JAK-STAT signaling pathway. In Ardeidae (herons), this protein is Genome polyprotein.